The following is an 887-amino-acid chain: MGEAEKFHYIYSCDLDINVQLKIGSLEGKREQKSYKAVLEDPMLKFSGLYQETCSDLYVTCQVFAEGKPLALPVRTSYKAFSTRWNWNEWLKLPVKYPDLPRNAQVALTIWDVYGPGKAVPVGGTTVSLFGKYGMFRQGMHDLKVWPNVEADGSEPTKTPGRTSSTLSEDQMSRLAKLTKAHRQGHMVKVDWLDRLTFREIEMINESEKRSSNFMYLMVEFRCVKCDDKEYGIVYYEKDGDESSPILTGFEIVKVPDPQMSMENLVESKHHKLARSLRSGPSDHGLKPNAATRDQLNIIVSYPPTKQLTYEEQDLVWKFRYYLTNQEKALTKFLKCVNWDLPQEAKQALELLGKWKPMDVEDSLELLSSHYANPTVRRYAVARLRQADDEDLLMYLLQLVQALKYENFDDIKNGLEPTKKESQGSVSESVSNSGIGSAEIDSSQIITSPLPPVSSPPPASKTKESSDGESLEQDLCTFLISRACKNSTLANYLYWYVIVECEGQDTQQRDPKTHEMYLNVMRRFSQALLKGDKSVRVMRSLLAAQQTFVDRLVHLMKAVQRESGNRKKKNERLQALLGDNEKMNLSDVELIPLPLEPQVKIRGIIPETATLFKSALMPAQLFFKTEDGGKYPVIFKHGDDLRQDQLILQIISLMDKLLRKENLDLKLTPYKVLATSTKHGFMQFIQSVPVAEVLDTEGSIQNFFRKYAPSENGPNGISAEVMDTYVKSCAGYCVITYILGVGDRHLDNLLLTKTGKLFHIDFGYILGRDPKPLPPPMKLNKEMVEGMGGTQSEQYQEFRKQCYTAFLHLRRYSNLILNLFSLMVDANIPDIALEPDKTVKKVQDKFRLDLSDEEAVHYMQSLIDESVHALFAAVVEQIHKFAQYWRK.

The C2 PI3K-type domain maps to 35–184 (YKAVLEDPML…LAKLTKAHRQ (150 aa)). Positions 150–170 (EADGSEPTKTPGRTSSTLSED) are disordered. Residues 156–170 (PTKTPGRTSSTLSED) are compositionally biased toward polar residues. T163 bears the Phosphothreonine; by AMPK mark. The residue at position 165 (S165) is a Phosphoserine; by AMPK. Residues S244, S261, and S282 each carry the phosphoserine modification. One can recognise a PIK helical domain in the interval 282–520 (SDHGLKPNAA…PKTHEMYLNV (239 aa)). Disordered stretches follow at residues 416–435 (EPTK…NSGI) and 446–468 (ITSP…SSDG). The span at 423-435 (QGSVSESVSNSGI) shows a compositional bias: low complexity. Over residues 449–459 (PLPPVSSPPPA) the composition is skewed to pro residues. A PI3K/PI4K catalytic domain is found at 605–871 (IPETATLFKS…LIDESVHALF (267 aa)). Residues 611-617 (LFKSALM) form a G-loop region. A catalytic loop region spans residues 740–748 (GVGDRHLDN). Positions 759 to 780 (HIDFGYILGRDPKPLPPPMKLN) are activation loop.

The protein belongs to the PI3/PI4-kinase family. As to quaternary structure, component of the PI3K (PI3KC3/PI3K-III/class III phosphatidylinositol 3-kinase) complex the core of which is composed of the catalytic subunit PIK3C3, the regulatory subunit PIK3R4 and BECN1 associating with additional regulatory/auxiliary subunits to form alternative complex forms. Alternative complex forms containing a fourth regulatory subunit in a mutually exclusive manner are: the PI3K complex I (PI3KC3-C1) containing ATG14, and the PI3K complex II (PI3KC3-C2) containing UVRAG. PI3KC3-C1 displays a V-shaped architecture with PIK3R4 serving as a bridge between PIK3C3 and the ATG14:BECN1 subcomplex. Both, PI3KC3-C1 and PI3KC3-C2, can associate with further regulatory subunits such as RUBCN, SH3GLB1/Bif-1 and AMBRA1. PI3KC3-C1 probably associates with PIK3CB. Interacts with RAB7A in the presence of PIK3R4. Interacts with AMBRA1. Interacts with BECN1P1/BECN2. Interacts with SLAMF1. May be a component of a complex composed of RAB5A (in GDP-bound form), DYN2 and PIK3C3. Interacts with NCKAP1L. Interacts with ATG14; this interaction is increased in the absence of TMEM39A. Interacts with STEEP1; the interaction is STING1-dependent and required for trafficking of STING1 from the endoplasmic reticulum. Interacts with YWHAG. Interacts with ARMC3. Mn(2+) serves as cofactor. Ubiquitinated via 'Lys-29'- and 'Lys-48'-linked ubiquitination by UBE3C, promoting its degradation. Deubiquitination by ZRANB1/TRABID promotes its stabilization, leading to autophagosome maturation.

It is found in the midbody. The protein localises to the late endosome. Its subcellular location is the cytoplasmic vesicle. It localises to the autophagosome. It catalyses the reaction a 1,2-diacyl-sn-glycero-3-phospho-(1D-myo-inositol) + ATP = a 1,2-diacyl-sn-glycero-3-phospho-(1D-myo-inositol-3-phosphate) + ADP + H(+). Catalytic subunit of the PI3K complex that mediates formation of phosphatidylinositol 3-phosphate; different complex forms are believed to play a role in multiple membrane trafficking pathways: PI3KC3-C1 is involved in initiation of autophagosomes and PI3KC3-C2 in maturation of autophagosomes and endocytosis. As part of PI3KC3-C1, promotes endoplasmic reticulum membrane curvature formation prior to vesicle budding. Involved in regulation of degradative endocytic trafficking and required for the abscission step in cytokinesis, probably in the context of PI3KC3-C2. Involved in the transport of lysosomal enzyme precursors to lysosomes. Required for transport from early to late endosomes. The chain is Phosphatidylinositol 3-kinase catalytic subunit type 3 from Sus scrofa (Pig).